A 453-amino-acid polypeptide reads, in one-letter code: Collagen alpha-4(IV) chain (453 aa).

The interval 1-218 (GPPGPPGAPG…PPGPMGDPGP (218 aa)) is disordered. Residues 1 to 222 (GPPGPPGAPG…MGDPGPIGFG (222 aa)) form a triple-helical region region. Composition is skewed to pro residues over residues 26 to 44 (QGPP…PGPP), 60 to 72 (PGPP…PGPP), and 95 to 122 (PQGP…PLGP). Positions 153–162 (PEGTMGLPGM) are enriched in low complexity. Positions 174–183 (PGLDGRRGED) are enriched in basic and acidic residues. A compositionally biased stretch (pro residues) spans 206-215 (APGPPGPMGD). The Collagen IV NC1 domain occupies 228–453 (GFLLVLHSQT…SRCQVCVKHS (226 aa)). 6 cysteine pairs are disulfide-bonded: Cys243–Cys332, Cys276–Cys329, Cys288–Cys294, Cys351–Cys449, Cys385–Cys446, and Cys397–Cys404.

The protein belongs to the type IV collagen family. In terms of assembly, there are six type IV collagen isoforms, alpha 1(IV)-alpha 6(IV), each of which can form a triple helix structure with 2 other chains to generate type IV collagen network. The alpha 3(IV) chain forms a triple helical protomer with alpha 4(IV) and alpha 5(IV); this triple helical structure dimerizes through NC1-NC1 domain interactions such that the alpha 3(IV), alpha 4(IV) and alpha 5(IV) chains of one protomer connect with the alpha 5(IV), alpha 4(IV) and alpha 3(IV) chains of the opposite protomer, respectively. Associates with LAMB2 at the neuromuscular junction and in GBM. Prolines at the third position of the tripeptide repeating unit (G-X-Y) are hydroxylated in some or all of the chains. Post-translationally, type IV collagens contain numerous cysteine residues which are involved in inter- and intramolecular disulfide bonding. 12 of these, located in the NC1 domain, are conserved in all known type IV collagens. In terms of processing, the trimeric structure of the NC1 domains is stabilized by covalent bonds between Lys and Met residues. Alpha 3 and alpha 4 type IV collagens are colocalized and present only in basement membranes of kidney, eye, cochlea, lung and brain.

The protein resides in the secreted. The protein localises to the extracellular space. Its subcellular location is the extracellular matrix. It is found in the basement membrane. Type IV collagen is the major structural component of glomerular basement membranes (GBM), forming a 'chicken-wire' meshwork together with laminins, proteoglycans and entactin/nidogen. In Bos taurus (Bovine), this protein is Collagen alpha-4(IV) chain (COL4A4).